The primary structure comprises 368 residues: tRNA-specific 2-thiouridylase MnmA (368 aa).

ATP is bound by residues Gly12–Ser19 and Met38. The segment at Asn98–Asp100 is interaction with target base in tRNA. Catalysis depends on Cys103, which acts as the Nucleophile. An intrachain disulfide couples Cys103 to Cys200. Residue Gly128 coordinates ATP. Residues Lys150–Gln152 are interaction with tRNA. The Cysteine persulfide intermediate role is filled by Cys200. The tract at residues Arg313–Tyr314 is interaction with tRNA.

This sequence belongs to the MnmA/TRMU family. In terms of assembly, interacts with TusE.

It is found in the cytoplasm. It catalyses the reaction S-sulfanyl-L-cysteinyl-[protein] + uridine(34) in tRNA + AH2 + ATP = 2-thiouridine(34) in tRNA + L-cysteinyl-[protein] + A + AMP + diphosphate + H(+). Catalyzes the 2-thiolation of uridine at the wobble position (U34) of tRNA(Lys), tRNA(Glu) and tRNA(Gln), leading to the formation of s(2)U34, the first step of tRNA-mnm(5)s(2)U34 synthesis. Sulfur is provided by IscS, via a sulfur-relay system. Binds ATP and its substrate tRNAs. The sequence is that of tRNA-specific 2-thiouridylase MnmA from Pectobacterium atrosepticum (strain SCRI 1043 / ATCC BAA-672) (Erwinia carotovora subsp. atroseptica).